The following is a 228-amino-acid chain: RNA chaperone ProQ (228 aa).

The interval 107 to 178 (KARVQAQRAE…REEKHTPVSD (72 aa)) is disordered. Basic and acidic residues-rich tracts occupy residues 117–136 (QQAKKREAAAAAGEKEDAPR) and 146–175 (RRKEGAERKPRADKPTTKAPRAPREEKHTP).

This sequence belongs to the ProQ family.

Its subcellular location is the cytoplasm. In terms of biological role, RNA chaperone with significant RNA binding, RNA strand exchange and RNA duplexing activities. May regulate ProP activity through an RNA-based, post-transcriptional mechanism. The sequence is that of RNA chaperone ProQ from Salmonella agona (strain SL483).